Reading from the N-terminus, the 74-residue chain is Protein YkgV (74 aa).

The chain is Protein YkgV from Escherichia coli (strain K12).